A 105-amino-acid chain; its full sequence is Vacuolar ATPase assembly integral membrane protein VMA21 homolog (105 aa).

A disordered region spans residues 1–26 (MSTKNKKAAGGNGGAPKQTRQQSHDS). Over 1–36 (MSTKNKKAAGGNGGAPKQTRQQSHDSQDYSSFKTVL) the chain is Cytoplasmic. The chain crosses the membrane as a helical span at residues 37-57 (FYCMLIVFLPVLTFFVLKGFV). At 58 to 68 (LDQFLDISEVK) the chain is on the lumenal side. The helical transmembrane segment at 69-89 (VNIASAVGAVVALHVALGLYI) threads the bilayer. Residues 90–105 (YRAYFGAPGSKASKTD) are Cytoplasmic-facing.

This sequence belongs to the VMA21 family.

The protein resides in the endoplasmic reticulum membrane. It localises to the endoplasmic reticulum-Golgi intermediate compartment membrane. It is found in the cytoplasmic vesicle. The protein localises to the COPII-coated vesicle membrane. Its function is as follows. Required for the assembly of the V0 complex of the vacuolar ATPase (V-ATPase) in the endoplasmic reticulum. The protein is Vacuolar ATPase assembly integral membrane protein VMA21 homolog of Drosophila yakuba (Fruit fly).